We begin with the raw amino-acid sequence, 109 residues long: Small ribosomal subunit protein uS10 (109 aa).

It belongs to the universal ribosomal protein uS10 family. As to quaternary structure, part of the 30S ribosomal subunit.

In terms of biological role, involved in the binding of tRNA to the ribosomes. The protein is Small ribosomal subunit protein uS10 of Nanoarchaeum equitans (strain Kin4-M).